The following is a 134-amino-acid chain: Bet1-like protein At1g29060 (134 aa).

The segment covering 1–12 (MASNRGAGGSLY) has biased composition (gly residues). The disordered stretch occupies residues 1 to 31 (MASNRGAGGSLYGGADPYRSREGLSTRNASG). Residues 1–110 (MASNRGAGGS…LSIIRSGNNH (110 aa)) are Cytoplasmic-facing. The t-SNARE coiled-coil homology domain maps to 40–102 (DPMHSDLDDE…KNNIRKLNLS (63 aa)). Residues 111–131 (IMHVVLFALLLFFILYMWSKM) form a helical; Anchor for type IV membrane protein membrane-spanning segment. At 132 to 134 (FKR) the chain is on the vesicular side.

Belongs to the BET1 family.

The protein resides in the golgi apparatus membrane. It localises to the endoplasmic reticulum membrane. Required for vesicular transport from the ER to the Golgi complex. Functions as a SNARE associated with ER-derived vesicles. This Arabidopsis thaliana (Mouse-ear cress) protein is Bet1-like protein At1g29060.